We begin with the raw amino-acid sequence, 410 residues long: Large ribosomal subunit protein uL4 (410 aa).

It belongs to the universal ribosomal protein uL4 family.

It localises to the cytoplasm. In Tetrahymena thermophila (strain SB210), this protein is Large ribosomal subunit protein uL4 (RPL4).